Reading from the N-terminus, the 199-residue chain is Cytochrome c-type cyt cy (199 aa).

The helical transmembrane segment at 7–27 threads the bilayer; it reads ITKIGVTLFAVALFYGFIYML. A compositionally biased stretch (low complexity) spans 69–80; that stretch reads AAETAEAAAPAE. A disordered region spans residues 69–93; it reads AAETAEAAAPAEPAAPPPPAYVEVD. Positions 112, 115, 116, and 148 each coordinate heme c.

In terms of processing, binds 1 heme c group covalently per subunit.

The protein localises to the cell membrane. In terms of biological role, electron transfer pathways that operates during photosynthesis. In Rhodobacter capsulatus (strain ATCC BAA-309 / NBRC 16581 / SB1003), this protein is Cytochrome c-type cyt cy (cycY).